We begin with the raw amino-acid sequence, 1561 residues long: Synemin (1561 aa).

The tract at residues M1–S10 is head. The tract at residues E11–R49 is coil 1A. The segment at E11–N320 is interaction with DMD and UTRN. The region spanning E11–E322 is the IF rod domain. Positions E50–A58 are linker 1. The interval L59–T163 is coil 1B. Residues M164–S186 are linker 12. Residues Y187 to V300 are coil 2. Residues K301–F1561 form a tail region. Polar residues-rich tracts occupy residues S371–V390 and S401–S421. 3 disordered regions span residues S371–S421, D549–K574, and E591–T637. Over residues G601–T624 the composition is skewed to basic and acidic residues. The span at Q625 to T637 shows a compositional bias: polar residues. T653 bears the Phosphothreonine mark. Phosphoserine occurs at positions 655, 778, 780, 1044, 1049, 1077, 1087, 1179, and 1182. 2 disordered regions span residues S1033–G1061 and S1075–V1099. A compositionally biased stretch (polar residues) spans V1086–V1099. Residues V1152–Q1453 are interaction with TLN1 and VCL. The interval A1212–E1231 is disordered. Positions G1222–E1231 are enriched in basic and acidic residues. Positions A1242–G1557 are interaction with DMD and UTRN. A Phosphoserine modification is found at S1425. An Omega-N-methylarginine modification is found at R1481. The disordered stretch occupies residues D1491–G1519.

It belongs to the intermediate filament family. In terms of assembly, interacts with DES, DMD, DTNA, TLN1, UTRN and VCL. Isoform 1 and isoform 2 interact with GFAP and VIM. Isoform 2 and isoform 3 are detected in adult skeletal muscle, heart and bladder, whereas isoform 1 is only detected in adult bladder (at protein level).

The protein localises to the cytoplasm. The protein resides in the cytoskeleton. Its subcellular location is the cell junction. It localises to the adherens junction. Functionally, type-VI intermediate filament (IF) which plays an important cytoskeletal role within the muscle cell cytoskeleton. It forms heteromeric IFs with desmin and/or vimentin, and via its interaction with cytoskeletal proteins alpha-dystrobrevin, dystrophin, talin-1, utrophin and vinculin, is able to link these heteromeric IFs to adherens-type junctions, such as to the costameres, neuromuscular junctions, and myotendinous junctions within striated muscle cells. The chain is Synemin from Mus musculus (Mouse).